The primary structure comprises 78 residues: Defensin-like protein 281 (78 aa).

Residues 1–23 (MASTKYLVLLFICLSVLLTPGLG) form the signal peptide. Intrachain disulfides connect C37-C60, C46-C72, and C50-C74.

It belongs to the DEFL family.

It localises to the secreted. This Arabidopsis thaliana (Mouse-ear cress) protein is Defensin-like protein 281.